The sequence spans 120 residues: Phosphoribosyl-AMP cyclohydrolase (120 aa).

Mg(2+) is bound at residue D75. C76 contacts Zn(2+). Residues D77 and D79 each contribute to the Mg(2+) site. Zn(2+)-binding residues include C92 and C99.

This sequence belongs to the PRA-CH family. Homodimer. The cofactor is Mg(2+). It depends on Zn(2+) as a cofactor.

It is found in the cytoplasm. It carries out the reaction 1-(5-phospho-beta-D-ribosyl)-5'-AMP + H2O = 1-(5-phospho-beta-D-ribosyl)-5-[(5-phospho-beta-D-ribosylamino)methylideneamino]imidazole-4-carboxamide. The protein operates within amino-acid biosynthesis; L-histidine biosynthesis; L-histidine from 5-phospho-alpha-D-ribose 1-diphosphate: step 3/9. Catalyzes the hydrolysis of the adenine ring of phosphoribosyl-AMP. The protein is Phosphoribosyl-AMP cyclohydrolase of Haloarcula marismortui (strain ATCC 43049 / DSM 3752 / JCM 8966 / VKM B-1809) (Halobacterium marismortui).